The following is a 1254-amino-acid chain: Receptor tyrosine-protein kinase erbB-2 (1254 aa).

The signal sequence occupies residues 1–22 (MELAAWCGWGLLLALLSPGASG). At 23–652 (TQVCTGTDMK…PAEQRASPAT (630 aa)) the chain is on the extracellular side. An intrachain disulfide couples Cys-26 to Cys-53. Residues Asn-68, Asn-125, and Asn-187 are each glycosylated (N-linked (GlcNAc...) asparagine). 14 disulfides stabilise this stretch: Cys-162–Cys-192, Cys-195–Cys-204, Cys-199–Cys-212, Cys-236–Cys-244, Cys-240–Cys-252, Cys-255–Cys-264, Cys-268–Cys-295, Cys-299–Cys-311, Cys-315–Cys-331, Cys-334–Cys-338, Cys-342–Cys-367, Cys-475–Cys-504, Cys-511–Cys-520, and Cys-515–Cys-528. The N-linked (GlcNAc...) asparagine glycan is linked to Asn-259. Asn-530 carries N-linked (GlcNAc...) asparagine glycosylation. Disulfide bonds link Cys-531–Cys-540, Cys-544–Cys-560, Cys-563–Cys-576, Cys-567–Cys-584, Cys-587–Cys-596, Cys-600–Cys-623, Cys-626–Cys-634, and Cys-630–Cys-642. The N-linked (GlcNAc...) asparagine glycan is linked to Asn-571. An N-linked (GlcNAc...) asparagine glycan is attached at Asn-629. A helical transmembrane segment spans residues 653–675 (SIIATVVGILLFLVIGVVVGILI). The tract at residues 676–689 (KRRRQKIRKYTMRR) is required for interaction with KPNB1 and EEA1. Positions 676–689 (KRRRQKIRKYTMRR) match the Nuclear localization signal motif. The Cytoplasmic portion of the chain corresponds to 676–1254 (KRRRQKIRKY…PEYLGLDVPV (579 aa)). In terms of domain architecture, Protein kinase spans 720 to 987 (LRKVKVLGSG…RMARDPQRFV (268 aa)). ATP is bound by residues 726–734 (LGSGAFGTV) and Lys-753. Asp-845 acts as the Proton acceptor in catalysis. Residue Tyr-877 is modified to Phosphotyrosine. 2 disordered regions span residues 1029-1116 (GFFF…SEDP) and 1133-1179 (CSPQ…GKNG). 4 positions are modified to phosphoserine: Ser-1054, Ser-1078, Ser-1083, and Ser-1107. Position 1112 is a phosphotyrosine (Tyr-1112). Tyr-1139 is subject to Phosphotyrosine; by autocatalysis. The span at 1146–1161 (RPQPPLTPEGPLPPVR) shows a compositional bias: pro residues. A Phosphothreonine modification is found at Thr-1166. Residues 1195–1197 (EYL) are interaction with PIK3C2B. The residue at position 1196 (Tyr-1196) is a Phosphotyrosine. Positions 1223-1254 (DQDPSERGSPPNTFEGTPTAENPEYLGLDVPV) are disordered. A compositionally biased stretch (polar residues) spans 1232 to 1242 (PPNTFEGTPTA). The residue at position 1247 (Tyr-1247) is a Phosphotyrosine; by autocatalysis.

The protein belongs to the protein kinase superfamily. Tyr protein kinase family. EGF receptor subfamily. In terms of assembly, homodimer. Heterodimer with EGFR, ERBB3 and ERBB4. Part of a complex with EGFR and either PIK3C2A or PIK3C2B. May interact with PIK3C2B when phosphorylated on Tyr-1196. Interacts with PRKCABP and PLXNB1. Interacts (when phosphorylated on Tyr-1247) with MEMO. Interacts with MUC1. Interacts (when phosphorylated on Tyr-1139) with GRB7 (via SH2 domain). Interacts (when phosphorylated on Tyr-1247) with ERBIN. Interacts with SRC, KPNB1, RANBP2, EEA1, CRM1, CLTC, PTK6, RPA194, MYOC and ACTB. Interacts (preferentially with the tyrosine phosphorylated form) with CPNE3; this interaction occurs at the cell membrane and is increased in a growth factor heregulin-dependent manner. Interacts with HSP90AA1 and HSP90AB1 in an ATP-dependent manner; the interaction suppresses ERBB2 kinase activity. Interacts with SORL1; this interaction regulates ERBB2 subcellular distribution by promoting its recycling after internalization from endosomes back to the plasma membrane, hence stimulates ERBB2-mediated signaling. Interacts with SH3BGRL. Interacts with ROR1. Post-translationally, autophosphorylated. Autophosphorylation occurs in trans, i.e. one subunit of the dimeric receptor phosphorylates tyrosine residues on the other subunit. Ligand-binding increases phosphorylation on tyrosine residues. Signaling via SEMA4C promotes phosphorylation at Tyr-1247. Dephosphorylated by PTPN12.

It is found in the cell membrane. It localises to the cell projection. The protein localises to the ruffle membrane. Its subcellular location is the early endosome. The protein resides in the cytoplasm. It is found in the perinuclear region. It localises to the nucleus. The enzyme catalyses L-tyrosyl-[protein] + ATP = O-phospho-L-tyrosyl-[protein] + ADP + H(+). Protein tyrosine kinase that is part of several cell surface receptor complexes, but that apparently needs a coreceptor for ligand binding. Essential component of a neuregulin-receptor complex, although neuregulins do not interact with it alone. GP30 is a potential ligand for this receptor. Regulates outgrowth and stabilization of peripheral microtubules (MTs). Upon ERBB2 activation, the MEMO1-RHOA-DIAPH1 signaling pathway elicits the phosphorylation and thus the inhibition of GSK3B at cell membrane. This prevents the phosphorylation of APC and CLASP2, allowing its association with the cell membrane. In turn, membrane-bound APC allows the localization of MACF1 to the cell membrane, which is required for microtubule capture and stabilization. Its function is as follows. In the nucleus is involved in transcriptional regulation. Associates with the 5'-TCAAATTC-3' sequence in the PTGS2/COX-2 promoter and activates its transcription. Implicated in transcriptional activation of CDKN1A; the function involves STAT3 and SRC. Involved in the transcription of rRNA genes by RNA Pol I and enhances protein synthesis and cell growth. The sequence is that of Receptor tyrosine-protein kinase erbB-2 (ERBB2) from Mesocricetus auratus (Golden hamster).